An 86-amino-acid polypeptide reads, in one-letter code: U1-theraphotoxin-Pc1a (86 aa).

Residues 1-21 form the signal peptide; the sequence is MMRVLIVTAVFTFFLVLTSSG. A propeptide spanning residues 22 to 49 is cleaved from the precursor; the sequence is HDEDNEQRNILEGMFLDRAIETPKGLEE. Intrachain disulfides connect Cys53–Cys70, Cys60–Cys75, and Cys69–Cys80. A Valine amide modification is found at Val84.

In terms of tissue distribution, expressed by the venom gland.

The protein resides in the secreted. Its function is as follows. Possesses strong antiplasmodial activity against the intra-erythrocyte stage of P.falciparum in vitro. IC(50) for inhibiting P.falciparum growth is 1.59 uM. Interacts with infected and healthy erythrocytes. Does not lyse erythrocytes, is not cytotoxic to nucleated mammalian cells, and does not inhibit neuromuscular function. Has neither antibacterial nor antifungal activity. The sequence is that of U1-theraphotoxin-Pc1a from Psalmopoeus cambridgei (Trinidad chevron tarantula).